A 132-amino-acid chain; its full sequence is MGNDTIANMITSIRNANLEKTKTVQVPATNITKNIGKILLQEGFIENFREHEESKNCFLIFTLKYQGKKKKPYITTLRRISKPGLRIYSNHKEIPKVLGGMGIVILSTSEGIMTDREAREKKIGGEILCYVW.

The protein belongs to the universal ribosomal protein uS8 family. Part of the 30S ribosomal subunit.

It localises to the plastid. The protein resides in the chloroplast. Functionally, one of the primary rRNA binding proteins, it binds directly to 16S rRNA central domain where it helps coordinate assembly of the platform of the 30S subunit. In Physcomitrium patens (Spreading-leaved earth moss), this protein is Small ribosomal subunit protein uS8c (rps8).